A 309-amino-acid chain; its full sequence is Tyrosine recombinase XerD (309 aa).

The Core-binding (CB) domain occupies 3-88; that stretch reads MRASLAIENF…ALRQFFRFLY (86 aa). Positions 109 to 302 constitute a Tyr recombinase domain; that stretch reads PLPKIMSVEN…LEERLHKLVS (194 aa). Active-site residues include arginine 158, lysine 182, histidine 254, arginine 257, and histidine 280. Tyrosine 289 functions as the O-(3'-phospho-DNA)-tyrosine intermediate in the catalytic mechanism.

This sequence belongs to the 'phage' integrase family. XerD subfamily. As to quaternary structure, forms a cyclic heterotetrameric complex composed of two molecules of XerC and two molecules of XerD.

Its subcellular location is the cytoplasm. In terms of biological role, site-specific tyrosine recombinase, which acts by catalyzing the cutting and rejoining of the recombining DNA molecules. The XerC-XerD complex is essential to convert dimers of the bacterial chromosome into monomers to permit their segregation at cell division. It also contributes to the segregational stability of plasmids. In Brucella melitensis biotype 1 (strain ATCC 23456 / CCUG 17765 / NCTC 10094 / 16M), this protein is Tyrosine recombinase XerD.